The following is a 409-amino-acid chain: Pyruvate dehydrogenase E1 component subunit alpha, mitochondrial (409 aa).

At T6 the chain carries Phosphothreonine. Residues H109, Y135, R136, A174, G182, V184, D213, G214, A215, N242, and Y244 each contribute to the pyruvate site. 2 residues coordinate thiamine diphosphate: Y135 and R136. Residues G182, V184, D213, G214, A215, and N242 each coordinate thiamine diphosphate. D213 contributes to the Mg(2+) binding site. Mg(2+) is bound by residues N242 and Y244. At Y306 the chain carries Phosphotyrosine. A thiamine diphosphate-binding site is contributed by H309. S310 and S312 each carry phosphoserine.

Tetramer of 2 alpha and 2 beta subunits. Thiamine diphosphate is required as a cofactor. Mg(2+) serves as cofactor.

The protein resides in the mitochondrion matrix. It catalyses the reaction N(6)-[(R)-lipoyl]-L-lysyl-[protein] + pyruvate + H(+) = N(6)-[(R)-S(8)-acetyldihydrolipoyl]-L-lysyl-[protein] + CO2. Its activity is regulated as follows. E1 activity is regulated by phosphorylation (inactivation) and dephosphorylation (activation) of the alpha subunit. Functionally, the pyruvate dehydrogenase complex catalyzes the overall conversion of pyruvate to acetyl-CoA and CO(2). It contains multiple copies of three enzymatic components: pyruvate dehydrogenase (E1), dihydrolipoamide acetyltransferase (E2) and lipoamide dehydrogenase (E3). This chain is Pyruvate dehydrogenase E1 component subunit alpha, mitochondrial (pda1), found in Schizosaccharomyces pombe (strain 972 / ATCC 24843) (Fission yeast).